The primary structure comprises 297 residues: Aspartate carbamoyltransferase catalytic subunit (297 aa).

Carbamoyl phosphate contacts are provided by R48 and T49. K76 contacts L-aspartate. Carbamoyl phosphate is bound by residues R98, H129, and Q132. R162 and R214 together coordinate L-aspartate. A257 and P258 together coordinate carbamoyl phosphate.

It belongs to the aspartate/ornithine carbamoyltransferase superfamily. ATCase family. In terms of assembly, heterododecamer (2C3:3R2) of six catalytic PyrB chains organized as two trimers (C3), and six regulatory PyrI chains organized as three dimers (R2).

The catalysed reaction is carbamoyl phosphate + L-aspartate = N-carbamoyl-L-aspartate + phosphate + H(+). It functions in the pathway pyrimidine metabolism; UMP biosynthesis via de novo pathway; (S)-dihydroorotate from bicarbonate: step 2/3. Functionally, catalyzes the condensation of carbamoyl phosphate and aspartate to form carbamoyl aspartate and inorganic phosphate, the committed step in the de novo pyrimidine nucleotide biosynthesis pathway. The sequence is that of Aspartate carbamoyltransferase catalytic subunit from Leuconostoc mesenteroides subsp. mesenteroides (strain ATCC 8293 / DSM 20343 / BCRC 11652 / CCM 1803 / JCM 6124 / NCDO 523 / NBRC 100496 / NCIMB 8023 / NCTC 12954 / NRRL B-1118 / 37Y).